A 78-amino-acid chain; its full sequence is Apolipoprotein C-I (78 aa).

The N-terminal stretch at 1-26 (MRLILCLPVLVVVLLMVLEGPAPAQG) is a signal peptide.

The protein belongs to the apolipoprotein C1 family.

It is found in the secreted. Functionally, inhibitor of lipoprotein binding to the low density lipoprotein (LDL) receptor, LDL receptor-related protein, and very low density lipoprotein (VLDL) receptor. Associates with high density lipoproteins (HDL) and the triacylglycerol-rich lipoproteins in the plasma and makes up about 10% of the protein of the VLDL and 2% of that of HDL. Appears to interfere directly with fatty acid uptake and is also the major plasma inhibitor of cholesteryl ester transfer protein (CETP). Binds free fatty acids and reduces their intracellular esterification. Modulates the interaction of APOE with beta-migrating VLDL and inhibits binding of beta-VLDL to the LDL receptor-related protein. The sequence is that of Apolipoprotein C-I (APOC1) from Acinonyx jubatus (Cheetah).